Reading from the N-terminus, the 171-residue chain is ATP synthase subunit b (171 aa).

The helical transmembrane segment at 2–22 threads the bilayer; sequence FLVKMVLGFLILLSPLCATGL.

The protein belongs to the ATPase B chain family. F-type ATPases have 2 components, F(1) - the catalytic core - and F(0) - the membrane proton channel. F(1) has five subunits: alpha(3), beta(3), gamma(1), delta(1), epsilon(1). F(0) has three main subunits: a(1), b(2) and c(10-14). The alpha and beta chains form an alternating ring which encloses part of the gamma chain. F(1) is attached to F(0) by a central stalk formed by the gamma and epsilon chains, while a peripheral stalk is formed by the delta and b chains.

The protein localises to the cell inner membrane. F(1)F(0) ATP synthase produces ATP from ADP in the presence of a proton or sodium gradient. F-type ATPases consist of two structural domains, F(1) containing the extramembraneous catalytic core and F(0) containing the membrane proton channel, linked together by a central stalk and a peripheral stalk. During catalysis, ATP synthesis in the catalytic domain of F(1) is coupled via a rotary mechanism of the central stalk subunits to proton translocation. In terms of biological role, component of the F(0) channel, it forms part of the peripheral stalk, linking F(1) to F(0). In Helicobacter pylori (strain HPAG1), this protein is ATP synthase subunit b.